The sequence spans 359 residues: Peroxisome assembly protein 12 (359 aa).

The Peroxisomal matrix portion of the chain corresponds to M1 to S24. A helical transmembrane segment spans residues V25–F52. The Cytoplasmic portion of the chain corresponds to K53–T56. Residues F57–R81 traverse the membrane as a helical segment. The Peroxisomal matrix segment spans residues N82 to N106. Residues D107–L128 traverse the membrane as a helical segment. Topologically, residues N129–D133 are cytoplasmic. Residues R134–R184 form a helical membrane-spanning segment. The Peroxisomal matrix portion of the chain corresponds to S185–R253. Residues L254–L281 traverse the membrane as a helical segment. Residues D282–V359 lie on the Cytoplasmic side of the membrane. 4 residues coordinate Zn(2+): C307, C310, C328, and C331. The RING-type; degenerate zinc finger occupies C307–G346.

The protein belongs to the pex2/pex10/pex12 family. Component of the PEX2-PEX10-PEX12 retrotranslocation channel.

It is found in the peroxisome membrane. It functions in the pathway protein modification; protein ubiquitination. Functionally, component of a retrotranslocation channel required for peroxisome organization by mediating export of the PEX5/prx-5 receptor from peroxisomes to the cytosol, thereby promoting PEX5/prx-5 recycling. The retrotranslocation channel is composed of PEX2/prx-2, PEX10/prx-10 and PEX12/prx-12; each subunit contributing transmembrane segments that coassemble into an open channel that specifically allows the passage of PEX5/prx-5 through the peroxisomal membrane. PEX12/prx-12 also regulates PEX5/prx-5 recycling by activating the E3 ubiquitin-protein ligase activity of PEX10/prx-10. When PEX5 recycling is compromised, PEX12/prx-12 stimulates PEX10-mediated polyubiquitination of PEX5/prx-5, leading to its subsequent degradation. The chain is Peroxisome assembly protein 12 (prx-12) from Caenorhabditis elegans.